The sequence spans 82 residues: Large ribosomal subunit protein bL28 (82 aa).

The tract at residues 1–25 (MAKVDQITKKRAMTGNTRSHALNHS) is disordered.

This sequence belongs to the bacterial ribosomal protein bL28 family.

The chain is Large ribosomal subunit protein bL28 from Malacoplasma penetrans (strain HF-2) (Mycoplasma penetrans).